The primary structure comprises 269 residues: Adenosylcobinamide-GDP ribazoletransferase (269 aa).

Helical transmembrane passes span serine 63–leucine 83, leucine 87–leucine 107, valine 137–glycine 157, alanine 158–methionine 178, leucine 202–valine 222, and valine 246–phenylalanine 266.

This sequence belongs to the CobS family. The cofactor is Mg(2+).

It localises to the cell membrane. The enzyme catalyses alpha-ribazole + adenosylcob(III)inamide-GDP = adenosylcob(III)alamin + GMP + H(+). It carries out the reaction alpha-ribazole 5'-phosphate + adenosylcob(III)inamide-GDP = adenosylcob(III)alamin 5'-phosphate + GMP + H(+). It participates in cofactor biosynthesis; adenosylcobalamin biosynthesis; adenosylcobalamin from cob(II)yrinate a,c-diamide: step 7/7. Its function is as follows. Joins adenosylcobinamide-GDP and alpha-ribazole to generate adenosylcobalamin (Ado-cobalamin). Also synthesizes adenosylcobalamin 5'-phosphate from adenosylcobinamide-GDP and alpha-ribazole 5'-phosphate. The protein is Adenosylcobinamide-GDP ribazoletransferase of Deinococcus radiodurans (strain ATCC 13939 / DSM 20539 / JCM 16871 / CCUG 27074 / LMG 4051 / NBRC 15346 / NCIMB 9279 / VKM B-1422 / R1).